The chain runs to 180 residues: Acireductone dioxygenase (180 aa).

Fe(2+)-binding residues include histidine 99, histidine 101, glutamate 105, and histidine 145. 4 residues coordinate Ni(2+): histidine 99, histidine 101, glutamate 105, and histidine 145.

This sequence belongs to the acireductone dioxygenase (ARD) family. In terms of assembly, monomer. Requires Fe(2+) as cofactor. Ni(2+) is required as a cofactor.

It carries out the reaction 1,2-dihydroxy-5-(methylsulfanyl)pent-1-en-3-one + O2 = 3-(methylsulfanyl)propanoate + CO + formate + 2 H(+). The enzyme catalyses 1,2-dihydroxy-5-(methylsulfanyl)pent-1-en-3-one + O2 = 4-methylsulfanyl-2-oxobutanoate + formate + 2 H(+). It participates in amino-acid biosynthesis; L-methionine biosynthesis via salvage pathway; L-methionine from S-methyl-5-thio-alpha-D-ribose 1-phosphate: step 5/6. Catalyzes 2 different reactions between oxygen and the acireductone 1,2-dihydroxy-3-keto-5-methylthiopentene (DHK-MTPene) depending upon the metal bound in the active site. Fe-containing acireductone dioxygenase (Fe-ARD) produces formate and 2-keto-4-methylthiobutyrate (KMTB), the alpha-ketoacid precursor of methionine in the methionine recycle pathway. Ni-containing acireductone dioxygenase (Ni-ARD) produces methylthiopropionate, carbon monoxide and formate, and does not lie on the methionine recycle pathway. In Geobacillus thermodenitrificans (strain NG80-2), this protein is Acireductone dioxygenase.